The following is a 415-amino-acid chain: Secernin-2 (415 aa).

Residue cysteine 8 is part of the active site.

The protein belongs to the peptidase C69 family. Secernin subfamily.

The sequence is that of Secernin-2 (scrn2) from Danio rerio (Zebrafish).